The primary structure comprises 75 residues: Sec-independent protein translocase protein TatA (75 aa).

Residues 1-21 traverse the membrane as a helical segment; it reads MGSFSIWHWLVVLAIVLLVFG. The interval 40–75 is disordered; the sequence is KKGMRDEDKPNAQLGDESRSQDASRTAQDEHDRTPR.

Belongs to the TatA/E family. The Tat system comprises two distinct complexes: a TatABC complex, containing multiple copies of TatA, TatB and TatC subunits, and a separate TatA complex, containing only TatA subunits. Substrates initially bind to the TatABC complex, which probably triggers association of the separate TatA complex to form the active translocon.

The protein resides in the cell inner membrane. Its function is as follows. Part of the twin-arginine translocation (Tat) system that transports large folded proteins containing a characteristic twin-arginine motif in their signal peptide across membranes. TatA could form the protein-conducting channel of the Tat system. The chain is Sec-independent protein translocase protein TatA from Stenotrophomonas maltophilia (strain R551-3).